Reading from the N-terminus, the 193-residue chain is Dual-action ribosomal maturation protein DarP (193 aa).

Belongs to the DarP family.

It localises to the cytoplasm. Its function is as follows. Member of a network of 50S ribosomal subunit biogenesis factors which assembles along the 30S-50S interface, preventing incorrect 23S rRNA structures from forming. Promotes peptidyl transferase center (PTC) maturation. The chain is Dual-action ribosomal maturation protein DarP from Vibrio cholerae serotype O1 (strain ATCC 39315 / El Tor Inaba N16961).